Here is a 961-residue protein sequence, read N- to C-terminus: Lon protease homolog, mitochondrial (961 aa).

Residues 1–67 constitute a mitochondrion transit peptide; sequence MAGGTGCVRL…SPAAAGHWRG (67 aa). 2 disordered regions span residues 76 to 103 and 220 to 262; these read GGGAFSGGEDASEGGAEDGASGVGGSAG and QLEV…VVVG. One can recognise a Lon N-terminal domain in the interval 125 to 371; it reads LPLIAVTRNP…KALSLLKKEF (247 aa). The span at 235–244 shows a compositional bias: basic residues; it reads KLRKKPKRGK. Over residues 245 to 257 the composition is skewed to basic and acidic residues; sequence KEAEEDGATKRPL. 524 to 531 serves as a coordination point for ATP; the sequence is GPPGVGKT. The 192-residue stretch at 760–951 folds into the Lon proteolytic domain; that stretch reads VTPPGVVMGL…REIFDIAFPE (192 aa). The span at 784-801 shows a compositional bias: basic and acidic residues; it reads SLRRPRDRDSDKGDKDGS. Residues 784–803 are disordered; it reads SLRRPRDRDSDKGDKDGSLE. Residues serine 857 and lysine 900 contribute to the active site.

The protein belongs to the peptidase S16 family. In terms of assembly, homohexamer. Organized in a ring with a central cavity. The ATP-binding and proteolytic domains (AP-domain) form a hexameric chamber, while the N-terminal domain is arranged as a trimer of dimers. DNA and RNA binding is stimulated by substrate and inhibited by ATP binding. Interacts with TWNK and mitochondrial DNA polymerase subunit POLG.

It is found in the mitochondrion matrix. It carries out the reaction Hydrolysis of proteins in presence of ATP.. ATP-dependent serine protease that mediates the selective degradation of misfolded, unassembled or oxidatively damaged polypeptides as well as certain short-lived regulatory proteins in the mitochondrial matrix. Endogenous substrates include mitochondrial steroidogenic acute regulatory (StAR) protein, DELE1, helicase Twinkle (TWNK) and the large ribosomal subunit protein MRPL32/bL32m. MRPL32/bL32m is protected from degradation by LONP1 when it is bound to a nucleic acid (RNA), but TWNK is not. May also have a chaperone function in the assembly of inner membrane protein complexes. Participates in the regulation of mitochondrial gene expression and in the maintenance of the integrity of the mitochondrial genome. Binds to mitochondrial promoters and RNA in a single-stranded, site-specific, and strand-specific manner. May regulate mitochondrial DNA replication and/or gene expression using site-specific, single-stranded DNA binding to target the degradation of regulatory proteins binding to adjacent sites in mitochondrial promoters. This chain is Lon protease homolog, mitochondrial, found in Bos taurus (Bovine).